The sequence spans 750 residues: MIIRSPEPEVKILVDRDPIKTSFEEWAKPGHFSRTIAKGPDTTTWIWNLHADAHDFDSHTSDLEEISRKVFSAHFGQLSIIFLWLSGMYFHGARFSNYEAWLSDPTHIGPSAQVVWPIVGQEILNGDVGGGFRGIQITSGFFQLWRASGITSELQLYCTAIGALVFSALMLFAGWFHYHKAAPKLAWFQDVESMLNHHLAGLLGLGSLSWAGHQVHVSLPINQFLNAGVDPKEIPLPHEFILNRDLLAQLYPSFAEGATPFFTLNWSKYSEFLTFRGGLDPVTGGLWLTDIAHHHLAIAILFLIAGHMYRTNWGIGHGIKDILEAHKGPFTGQGHKGLYEILTTSWHAQLSLNLAMLGSLTIVVAHHMYSMPPYPYLATDYATQLSLFTHHMWIGGFLIVGAAAHAAIFMVRDYDPTNRYNDLLDRVLRHRDAIISHLNWVCIFLGFHSFGLYIHNDTMSALGRPQDMFSDTAIQLQPVFAQWIQNTHALAPGVTAPGETASTSLTWGGGELVAVGGKVALLPIPLGTADFLVHHIHAFTIHVTVLILLKGVLFARSSRLIPDKANLGFRFPCDGPGRGGTCQVSAWDHVFLGLFWMYNAISVVIFHFSWKMQSDVWGSISDQGVVTHITGGNFAQSSITINGWLRDFLWAQASQVIQSYGSSLSAYGLFFLGAHFVWAFSLMFLFSGRGYWQELIESIVWAHNKLKVAPATQPRALSIVQGRAVGVTHYLLGGIATTWAFFLARIIAVG.

8 helical membrane passes run 70–93 (VFSAHFGQLSIIFLWLSGMYFHGA), 156–179 (LYCTAIGALVFSALMLFAGWFHYH), 195–219 (LNHHLAGLLGLGSLSWAGHQVHVSL), 291–309 (IAHHHLAIAILFLIAGHMY), 346–369 (WHAQLSLNLAMLGSLTIVVAHHMY), 385–411 (LSLFTHHMWIGGFLIVGAAAHAAIFMV), 433–455 (AIISHLNWVCIFLGFHSFGLYIH), and 531–549 (FLVHHIHAFTIHVTVLILL). [4Fe-4S] cluster-binding residues include C573 and C582. A run of 2 helical transmembrane segments spans residues 589-610 (HVFLGLFWMYNAISVVIFHFSW) and 664-686 (LSAYGLFFLGAHFVWAFSLMFLF). H675 is a chlorophyll a' binding site. Chlorophyll a is bound by residues M683 and Y691. Residue W692 participates in phylloquinone binding. Residues 724-744 (AVGVTHYLLGGIATTWAFFLA) traverse the membrane as a helical segment.

This sequence belongs to the PsaA/PsaB family. In terms of assembly, the PsaA/B heterodimer binds the P700 chlorophyll special pair and subsequent electron acceptors. PSI consists of a core antenna complex that captures photons, and an electron transfer chain that converts photonic excitation into a charge separation. The eukaryotic PSI reaction center is composed of at least 11 subunits. P700 is a chlorophyll a/chlorophyll a' dimer, A0 is one or more chlorophyll a, A1 is one or both phylloquinones and FX is a shared 4Fe-4S iron-sulfur center. is required as a cofactor.

The protein localises to the plastid. It is found in the chloroplast thylakoid membrane. It carries out the reaction reduced [plastocyanin] + hnu + oxidized [2Fe-2S]-[ferredoxin] = oxidized [plastocyanin] + reduced [2Fe-2S]-[ferredoxin]. PsaA and PsaB bind P700, the primary electron donor of photosystem I (PSI), as well as the electron acceptors A0, A1 and FX. PSI is a plastocyanin-ferredoxin oxidoreductase, converting photonic excitation into a charge separation, which transfers an electron from the donor P700 chlorophyll pair to the spectroscopically characterized acceptors A0, A1, FX, FA and FB in turn. Oxidized P700 is reduced on the lumenal side of the thylakoid membrane by plastocyanin. The sequence is that of Photosystem I P700 chlorophyll a apoprotein A1 from Lepidium virginicum (Virginia pepperweed).